Consider the following 262-residue polypeptide: Small ribosomal subunit protein eS4 (262 aa).

The S4 RNA-binding domain occupies 42-104; that stretch reads LPLILILRNR…TNEDFRLLYD (63 aa).

Belongs to the eukaryotic ribosomal protein eS4 family.

The protein resides in the cytoplasm. The chain is Small ribosomal subunit protein eS4 (RPS4) from Gossypium hirsutum (Upland cotton).